The primary structure comprises 158 residues: SsrA-binding protein (158 aa).

The protein belongs to the SmpB family.

Its subcellular location is the cytoplasm. Functionally, required for rescue of stalled ribosomes mediated by trans-translation. Binds to transfer-messenger RNA (tmRNA), required for stable association of tmRNA with ribosomes. tmRNA and SmpB together mimic tRNA shape, replacing the anticodon stem-loop with SmpB. tmRNA is encoded by the ssrA gene; the 2 termini fold to resemble tRNA(Ala) and it encodes a 'tag peptide', a short internal open reading frame. During trans-translation Ala-aminoacylated tmRNA acts like a tRNA, entering the A-site of stalled ribosomes, displacing the stalled mRNA. The ribosome then switches to translate the ORF on the tmRNA; the nascent peptide is terminated with the 'tag peptide' encoded by the tmRNA and targeted for degradation. The ribosome is freed to recommence translation, which seems to be the essential function of trans-translation. This is SsrA-binding protein from Bartonella tribocorum (strain CIP 105476 / IBS 506).